The chain runs to 401 residues: MSIIEDARKALLKYPLCDHCLGRLFASRGLMISNEERGRSIKNVLFMESLNSSTGTYNEDTLVALAKSGHRESLLFLRRMGKVIEQQPCFICGNLFDKININDIVSKVEEEINRQGIEFNSFQVGSTVNKGVIENEVKVSTELGITSSESIKRELNRLIGKVLADKLGKRYSRLNPDVVIKVNTSDGSVSVEVMPIYIEARYRKLIRGIPQVGDSSVASVAREVVSELRPLNVVLHFAGIEGPEVRVLGLGRPMIIEATRPLRRSLPGGIITRHGVQLLNLKAAGKVQVREIKSKAGELRRVFRILVKLHGSVTDEQLRSLEDYFSNRQIRQSMGKGRRVKLIYGLKVVPVHGSILELIVNTQGGFSVRRFITGEGTEPSVSGTLGIKVTPIEIDILNIWH.

Residues 64 to 195 enclose the THUMP domain; sequence ALAKSGHRES…DGSVSVEVMP (132 aa).

Belongs to the pseudouridine synthase Pus10 family.

It catalyses the reaction uridine(54) in tRNA = pseudouridine(54) in tRNA. It carries out the reaction uridine(55) in tRNA = pseudouridine(55) in tRNA. In terms of biological role, responsible for synthesis of pseudouridine from uracil-54 and uracil-55 in the psi GC loop of transfer RNAs. This Caldivirga maquilingensis (strain ATCC 700844 / DSM 13496 / JCM 10307 / IC-167) protein is tRNA pseudouridine synthase Pus10.